We begin with the raw amino-acid sequence, 559 residues long: Actin-binding protein WASF1 (559 aa).

3 disordered regions span residues 170 to 202 (EDKR…DRRR), 304 to 383 (IENR…GVLH), and 412 to 490 (VHPL…HPST). Over residues 182–202 (KNLDRPHEPEKVPRAPHDRRR) the composition is skewed to basic and acidic residues. A compositionally biased stretch (polar residues) spans 304 to 313 (IENRPQSPAT). Residues 322–332 (PTPPPPPPPLP) show a composition bias toward pro residues. The segment covering 333 to 346 (SALSTSSLRASMTS) has biased composition (low complexity). Asymmetric dimethylarginine; alternate is present on arginine 341. Arginine 341 carries the omega-N-methylarginine; alternate modification. Composition is skewed to pro residues over residues 347 to 360 (TPPP…PPPA), 423 to 437 (LPPP…PPGI), and 460 to 477 (STAP…PPSQ). Residue serine 489 is modified to Phosphoserine. One can recognise a WH2 domain in the interval 497-514 (ARSVLLEAIRKGIQLRKV).

This sequence belongs to the SCAR/WAVE family. As to quaternary structure, component of the WAVE1 complex composed of ABI2, CYFIP1 or CYFIP2, BRK1, NCKAP1 and WASF1/WAVE1. Within the complex, a heterodimer containing NCKAP1 and CYFIP1 interacts with a heterotrimer formed by WAVE1, ABI2 and BRK1. CYFIP2 binds to activated RAC1 which causes the complex to dissociate, releasing activated WASF1. The complex can also be activated by NCK1. Binds actin and the Arp2/3 complex. Interacts with BAIAP2. Interacts with SHANK3; the interaction mediates the association of SHANK3 with the WAVE1 complex. Interacts with ABI1 (via N-terminus). Interacts with SORBS2; this interaction greatly enhances phosphorylation by ABL1 and dephosphorylation by PTPN12 and might mediate partial to focal adhesion sites.

Its subcellular location is the cytoplasm. The protein resides in the cytoskeleton. It localises to the synapse. It is found in the cell junction. The protein localises to the focal adhesion. Downstream effector molecule involved in the transmission of signals from tyrosine kinase receptors and small GTPases to the actin cytoskeleton. Promotes formation of actin filaments. Part of the WAVE complex that regulates lamellipodia formation. The WAVE complex regulates actin filament reorganization via its interaction with the Arp2/3 complex. As component of the WAVE1 complex, required for BDNF-NTRK2 endocytic trafficking and signaling from early endosomes. Also involved in the regulation of mitochondrial dynamics. The polypeptide is Actin-binding protein WASF1 (WASF1) (Pongo abelii (Sumatran orangutan)).